A 219-amino-acid chain; its full sequence is 7-cyano-7-deazaguanine synthase (219 aa).

10-20 is a binding site for ATP; that stretch reads FSGGQDSTTCL. Zn(2+)-binding residues include C188, C197, C200, and C203.

This sequence belongs to the QueC family. Homodimer. Requires Zn(2+) as cofactor.

The enzyme catalyses 7-carboxy-7-deazaguanine + NH4(+) + ATP = 7-cyano-7-deazaguanine + ADP + phosphate + H2O + H(+). Its pathway is purine metabolism; 7-cyano-7-deazaguanine biosynthesis. Catalyzes the ATP-dependent conversion of 7-carboxy-7-deazaguanine (CDG) to 7-cyano-7-deazaguanine (preQ(0)). This Clostridium botulinum (strain 657 / Type Ba4) protein is 7-cyano-7-deazaguanine synthase.